Reading from the N-terminus, the 254-residue chain is 5-oxoprolinase subunit A 1 (254 aa).

Belongs to the LamB/PxpA family. In terms of assembly, forms a complex composed of PxpA, PxpB and PxpC.

It carries out the reaction 5-oxo-L-proline + ATP + 2 H2O = L-glutamate + ADP + phosphate + H(+). In terms of biological role, catalyzes the cleavage of 5-oxoproline to form L-glutamate coupled to the hydrolysis of ATP to ADP and inorganic phosphate. The polypeptide is 5-oxoprolinase subunit A 1 (Burkholderia pseudomallei (strain K96243)).